We begin with the raw amino-acid sequence, 612 residues long: Peroxisomal carnitine O-octanoyltransferase (612 aa).

Methionine 1 carries the post-translational modification N-acetylmethionine. N6-succinyllysine is present on residues lysine 40 and lysine 57. Catalysis depends on histidine 327, which acts as the Proton acceptor. Residues lysine 406 and 410-417 each bind CoA; that span reads KNKMLHPD. Lysine 406 bears the N6-acetyllysine; alternate mark. An N6-succinyllysine; alternate modification is found at lysine 406. (R)-carnitine contacts are provided by tyrosine 439, threonine 441, and threonine 452. The Microbody targeting signal signature appears at 610 to 612; the sequence is THL.

The protein belongs to the carnitine/choline acetyltransferase family. As to quaternary structure, monomer.

It localises to the peroxisome. The catalysed reaction is octanoyl-CoA + (R)-carnitine = O-octanoyl-(R)-carnitine + CoA. The enzyme catalyses 4,8-dimethylnonanoyl-CoA + (R)-carnitine = O-4,8-dimethylnonanoyl-(R)-carnitine + CoA. Its pathway is lipid metabolism; fatty acid beta-oxidation. Beta-oxidation of fatty acids. The highest activity concerns the C6 to C10 chain length substrate. Converts the end product of pristanic acid beta oxidation, 4,8-dimethylnonanoyl-CoA, to its corresponding carnitine ester. This chain is Peroxisomal carnitine O-octanoyltransferase (CROT), found in Homo sapiens (Human).